The sequence spans 51 residues: GLWIKGNYCLRGRCLPGGRKCCNGRPCECFAKICSCKPKLIGKLSALKKHT.

Disulfide bonds link C9-C22, C14-C27, C21-C36, and C29-C34.

In terms of processing, contains 4 disulfide bonds. In terms of tissue distribution, expressed by the venom gland.

The protein localises to the secreted. This chain is Toxin CSTX-18, found in Cupiennius salei (American wandering spider).